The following is a 287-amino-acid chain: Phosphoribosylaminoimidazole-succinocarboxamide synthase (287 aa).

This sequence belongs to the SAICAR synthetase family.

The enzyme catalyses 5-amino-1-(5-phospho-D-ribosyl)imidazole-4-carboxylate + L-aspartate + ATP = (2S)-2-[5-amino-1-(5-phospho-beta-D-ribosyl)imidazole-4-carboxamido]succinate + ADP + phosphate + 2 H(+). Its pathway is purine metabolism; IMP biosynthesis via de novo pathway; 5-amino-1-(5-phospho-D-ribosyl)imidazole-4-carboxamide from 5-amino-1-(5-phospho-D-ribosyl)imidazole-4-carboxylate: step 1/2. The sequence is that of Phosphoribosylaminoimidazole-succinocarboxamide synthase from Neisseria meningitidis serogroup A / serotype 4A (strain DSM 15465 / Z2491).